Consider the following 271-residue polypeptide: MSRYKKMFQKLSFLKEGCFVPFVVIGDPSLEMSLKIIETLIENGADALELGIPFSDPLADGPIIQKASLRALYKKNTFLQCFELIENIRNKYLHLPIGILLYANLVYNYGIKNFYYQCFRSGLDSVLIADIPIEEYEPFYKIANQYNINSIFICPPDADDSLLSKISLYAKGYIYLLSRPGVTGIEKKTISLSNIFIEKIKKYNSLPLLQGFGIENPTQIQKSILSGTNGVICGSAIIDIIEKNLNKEKKMINEIKNFTSKLKKATKFVQS.

Residues E49 and D60 each act as proton acceptor in the active site.

Belongs to the TrpA family. In terms of assembly, tetramer of two alpha and two beta chains.

It carries out the reaction (1S,2R)-1-C-(indol-3-yl)glycerol 3-phosphate + L-serine = D-glyceraldehyde 3-phosphate + L-tryptophan + H2O. It functions in the pathway amino-acid biosynthesis; L-tryptophan biosynthesis; L-tryptophan from chorismate: step 5/5. In terms of biological role, the alpha subunit is responsible for the aldol cleavage of indoleglycerol phosphate to indole and glyceraldehyde 3-phosphate. The chain is Tryptophan synthase alpha chain from Buchnera aphidicola subsp. Schizaphis graminum (strain Sg).